Reading from the N-terminus, the 117-residue chain is Large ribosomal subunit protein uL18 (117 aa).

Belongs to the universal ribosomal protein uL18 family. As to quaternary structure, part of the 50S ribosomal subunit; part of the 5S rRNA/L5/L18/L25 subcomplex. Contacts the 5S and 23S rRNAs.

Its function is as follows. This is one of the proteins that bind and probably mediate the attachment of the 5S RNA into the large ribosomal subunit, where it forms part of the central protuberance. The chain is Large ribosomal subunit protein uL18 from Thiobacillus denitrificans (strain ATCC 25259 / T1).